Reading from the N-terminus, the 529-residue chain is MQQRRPVRRALLSVSDKAGIVEFAQALSARGVELLSTGGTARLLAEKGLPVTEVSDYTGFPEMMDGRVKTLHPKVHGGILGRRGQDDAIMEEHQIQPIDMVVVNLYPFAQTVAREGCSLEDAVENIDIGGPTMVRSAAKNHKDVAIVVKSSDYDAIIKEMDDNEGSLTLATRFDLAIKAFEHTAAYDSMIANYFGSMVPAYHGESKEAAGRFPRTLNLNFIKKQDMRYGENSHQQAAFYIEENVKEASVATATQVQGKALSYNNIADTDAALECVKEFAEPACVIVKHANPCGVAIGNSILDAYDRAYKTDPTSAFGGIIAFNRELDAESAQAIISRQFVEVIIAPSASEEALKITAAKQNVRVLTCGQWGERVPGLDFKRVNGGLLVQDRDLGMVGAEELRVVTQRQPTEQELRDALFCWKVAKFVKSNAIVYAKNNMTIGIGAGQMSRVYSAKIAGIKAADEGLEVKGSSMASDAFFPFRDGIDAAAAAGVTCVIQPGGSIRDDEVIAAADEHGIAMLFTDMRHFRH.

Positions 1–148 (MQQRRPVRRA…KNHKDVAIVV (148 aa)) constitute an MGS-like domain. Lys287 bears the N6-acetyllysine mark.

The protein belongs to the PurH family.

The enzyme catalyses (6R)-10-formyltetrahydrofolate + 5-amino-1-(5-phospho-beta-D-ribosyl)imidazole-4-carboxamide = 5-formamido-1-(5-phospho-D-ribosyl)imidazole-4-carboxamide + (6S)-5,6,7,8-tetrahydrofolate. The catalysed reaction is IMP + H2O = 5-formamido-1-(5-phospho-D-ribosyl)imidazole-4-carboxamide. The protein operates within purine metabolism; IMP biosynthesis via de novo pathway; 5-formamido-1-(5-phospho-D-ribosyl)imidazole-4-carboxamide from 5-amino-1-(5-phospho-D-ribosyl)imidazole-4-carboxamide (10-formyl THF route): step 1/1. It functions in the pathway purine metabolism; IMP biosynthesis via de novo pathway; IMP from 5-formamido-1-(5-phospho-D-ribosyl)imidazole-4-carboxamide: step 1/1. This is Bifunctional purine biosynthesis protein PurH from Escherichia coli O9:H4 (strain HS).